Reading from the N-terminus, the 490-residue chain is Sphingomyelinase (490 aa).

The first 31 residues, 1 to 31 (MDYAKRIGQVGALAVVLGVGAAVTTHAIGSA), serve as a signal peptide directing secretion. The disordered stretch occupies residues 30–49 (SAAPTDPSSSSTDSPVDACS). Topologically, residues 32–136 (APTDPSSSST…FDACDPDGNR (105 aa)) are periplasmic. Residues 137–145 (MTFAVRERG) traverse the membrane as a beta stranded segment. The Extracellular segment spans residues 146 to 161 (APGGPQHGIVTVDQRT). A beta stranded membrane pass occupies residues 162–168 (ASFIYTA). Residues 169–171 (DPG) lie on the Periplasmic side of the membrane. Residues 172-182 (FVGTDTFSVNV) traverse the membrane as a beta stranded segment. The Extracellular segment spans residues 183 to 187 (SDDTS). Residues 188–196 (LHVHGLAGY) form a beta stranded membrane-spanning segment. Over 197-204 (LGPFHGHD) the chain is Periplasmic. A beta stranded membrane pass occupies residues 205-213 (DVATVTVFV). At 214–490 (GNTPTDTISG…HYVADNVAVR (277 aa)) the chain is on the extracellular side.

The protein belongs to the SpmT family.

The protein resides in the cell outer membrane. The enzyme catalyses a sphingomyelin + H2O = phosphocholine + an N-acylsphing-4-enine + H(+). Functionally, catalyzes the cleavage of sphingomyelin, a major lipid in eukaryotic cells, into ceramide and phosphocholine, which are then utilized by M.bovis as carbon, nitrogen and phosphorus sources, respectively. Thus, enables M.bovis to utilize sphingomyelin as a source of several essential nutrients for intracellular growth during infection. Furthermore, lyses erythrocytes and constitutes a hemolytic factor. The polypeptide is Sphingomyelinase (Mycobacterium bovis (strain ATCC BAA-935 / AF2122/97)).